A 622-amino-acid polypeptide reads, in one-letter code: Low affinity potassium transport system protein Kup (622 aa).

A run of 12 helical transmembrane segments spans residues 9-29, 49-69, 103-123, 137-157, 165-185, 213-233, 247-267, 276-296, 337-357, 363-383, 396-416, and 419-439; these read LPAI…TSPL, VFGF…IKYL, VIMG…TPAI, PQLD…LFMI, VGKL…GLGL, VSFI…ALYA, WFTV…ALLL, PFFL…AALA, IYIP…IVSF, LAAA…ILST, FVAL…TANL, and LLSG…VMTT.

Belongs to the HAK/KUP transporter (TC 2.A.72) family.

The protein resides in the cell inner membrane. It carries out the reaction K(+)(in) + H(+)(in) = K(+)(out) + H(+)(out). Functionally, responsible for the low-affinity transport of potassium into the cell. Likely operates as a K(+):H(+) symporter. The sequence is that of Low affinity potassium transport system protein Kup from Escherichia fergusonii (strain ATCC 35469 / DSM 13698 / CCUG 18766 / IAM 14443 / JCM 21226 / LMG 7866 / NBRC 102419 / NCTC 12128 / CDC 0568-73).